A 294-amino-acid polypeptide reads, in one-letter code: Ribosomal RNA small subunit methyltransferase H (294 aa).

S-adenosyl-L-methionine contacts are provided by residues 36–38 (GGH), aspartate 55, phenylalanine 82, aspartate 97, and glutamine 104.

This sequence belongs to the methyltransferase superfamily. RsmH family.

Its subcellular location is the cytoplasm. The catalysed reaction is cytidine(1402) in 16S rRNA + S-adenosyl-L-methionine = N(4)-methylcytidine(1402) in 16S rRNA + S-adenosyl-L-homocysteine + H(+). Specifically methylates the N4 position of cytidine in position 1402 (C1402) of 16S rRNA. This Synechococcus sp. (strain CC9605) protein is Ribosomal RNA small subunit methyltransferase H.